Reading from the N-terminus, the 1390-residue chain is MSNEDVAEDVSQVTDFHFHTCRKFRLFSSKSDGYSQNEINIRNRVATSSQLGVTFVTVNSNQLSCFHTKSLLGYKITRENMNVEVTDLPIKTIRLHGVVLINDMGVNSDGTVLGVLHTKNNDVSVDVFDIKKICTSSSIEPFKPLCTTRVGTEQINQGSCLEWNPAFPDTFAASSTDRSILVAKINVQSPANQKLVGIGKFGAVTTAISWSPKGKQLTIGDSLGKIVQLKPELEVVRSQHGPENKPNYGRITGLCWLATTEWLVSLENGTDQDAYLMRCKKDKPTEWIQFHELSYSSSKWPLPPQLFPATQLLVDWNVVIVGNSKTSEISTVGKRDDWQTWVPVEGESIYLPTTSSGKDTVPIGVAVDRSMTDEVLLNPDGSQRHRPSPLVLCLTNDGILTAHHIISTFAAHIPCQMSSQNLAINDLKKLQFDSQKPISAPPSDQTPVTKPSTVFGQKPEAETLKSSLVGSPSSVQTPKPSSSLFNPKSIASNIETSQLTESKPSTPAAPSSQPKIASTPKSEAIPKISDKTLEHKKAELIATKKQVLIERMDKINDSMAGAKDATMKLSFAVGKVKTTIMECADVVRASLGDSKEVMDELKNLILSIERMSDRTQHTVKEMDFEIDEKMELVAGVEDGNQVLEKLRNMSETEKLMRFNKLETAADLLNGKYEECSDLIKKLRMSLSEKESLRKQAILSPLRLSSNLNQLRSGSETELALKVMRNVSKIIMDTREQIQRTELEFVRFQRDVKFQNFKKGKENLNFTQPLEMSSLDGDAPQGKSLTDAESIKVRQALVNQIQKRGIVKTRNVIVESYKKSENSAAMKNDLLDTSNLSNAILKLSMTPRRVMPSSSLFSASPSTPSTKSDAATQADEPPIVKTVVVTVESPAKPIASAPAVSSPLIKLNTTTATTTMTTPKVTVPKEEANKTQDQKPIISTPASSSIFSSGSLFGTKTQTPLVSKEESTLTTGVPSLINSSLSISPQEIEKASSKVETLNKTEEVKDEKSENEVTPDLKSEEPKSLETKVKEEPKPAVQTPVKEEETGSNIQKTPSFSFNSTTTPKSTSSTSSIFGGGLKTQTPSSSNSTNIFGARTTTTATPTPASNTSSIFGGGSKAASSPFGSFGQAGCQPAKTSNPATSTASVTFSFNTGATSASAKPAGFGSFGAGASAKPSSVFGGSVTAPTVPNVDDGMEDDSMANGGGSGGFMSGLGNARTSNTSGGNNPFAPKTSTGTSASSSSWLFGGGGNQQQQQQQKPSFSFNTAGSSAQQASAPATGTSSVFGGAPKFGSQPAFGAKPFGGGANAGLSKNASIFGGATSSTTNNPATGGFAQFASGQKTSSLFGGGATPQTNTSIFGGGANTTPAPTSSVFGGGASANANKPTSFTSWR.

Composition is skewed to polar residues over residues 434–455 and 464–521; these read SQKP…STVF and LKSS…STPK. Disordered regions lie at residues 434–530, 851–874, and 985–1118; these read SQKP…KISD, PSSS…TQAD, and QEIE…SKAA. The segment covering 851–864 has biased composition (low complexity); sequence PSSSLFSASPSTPS. Basic and acidic residues predominate over residues 986–1033; the sequence is EIEKASSKVETLNKTEEVKDEKSENEVTPDLKSEEPKSLETKVKEEPK. The segment covering 1051 to 1071 has biased composition (low complexity); the sequence is KTPSFSFNSTTTPKSTSSTSS. Repeat unit 1 spans residues 1073–1074; it reads FG. Positions 1073 to 1373 are 17 X 2 AA repeats of F-G; it reads FGGGLKTQTP…TPAPTSSVFG (301 aa). Positions 1078–1090 are enriched in polar residues; sequence KTQTPSSSNSTNI. Repeat unit 2 spans residues 1091-1092; the sequence is FG. Residues 1095-1109 show a composition bias toward low complexity; sequence TTTTATPTPASNTSS. A run of 6 repeats spans residues 1111–1112, 1122–1123, 1125–1126, 1163–1164, 1166–1167, and 1178–1179. Residues 1183–1280 are disordered; that stretch reads TAPTVPNVDD…QASAPATGTS (98 aa). Over residues 1201-1210 the composition is skewed to gly residues; sequence NGGGSGGFMS. Residues 1231–1243 show a composition bias toward low complexity; it reads TSTGTSASSSSWL. Repeat unit 9 spans residues 1244-1245; the sequence is FG. The segment covering 1264–1280 has biased composition (low complexity); it reads TAGSSAQQASAPATGTS. 8 repeat units span residues 1283 to 1284, 1289 to 1290, 1295 to 1296, 1300 to 1301, 1315 to 1316, 1344 to 1345, 1357 to 1358, and 1372 to 1373. The span at 1342 to 1371 shows a compositional bias: polar residues; it reads SLFGGGATPQTNTSIFGGGANTTPAPTSSV. Residues 1342–1390 are disordered; sequence SLFGGGATPQTNTSIFGGGANTTPAPTSSVFGGGASANANKPTSFTSWR. Over residues 1378-1390 the composition is skewed to polar residues; it reads ANANKPTSFTSWR.

Interacts with caspase ced-3 (via propeptide); the interaction tethers ced-3 to the nuclear membrane and prevents its autoprocessing in absence of ced-4.

Its subcellular location is the nucleus. It localises to the nuclear pore complex. The protein resides in the nucleus membrane. Its function is as follows. May serve as a docking site in the receptor-mediated import of substrates across the nuclear pore complex. Plays a role in apoptosis by tethering caspase ced-3 to the nuclear membrane preventing its autoprocessing in absence of ced-4. In Caenorhabditis elegans, this protein is Nuclear pore complex protein 14.